Here is a 243-residue protein sequence, read N- to C-terminus: Mitochondrial import inner membrane translocase subunit TIM17-2 (243 aa).

4 consecutive transmembrane segments (helical) span residues 19-36, 66-83, 90-109, and 115-137; these read IGGA…FHFI, FAVW…MVYL, WNSI…RQGA, and SAIF…NKVL. A run of 10 repeats spans residues 149–151, 152–154, 155–157, 158–160, 161–163, 164–166, 167–169, 170–172, 173–175, and 176–178. The interval 149–178 is 10 X approximate repeats GMQ/P; the sequence is GMQGMPGMQGMQGMPGMPGMQGMPGMQGMQ. Positions 166-183 are enriched in low complexity; it reads PGMQGMPGMQGMQMGQMQ. The tract at residues 166–243 is disordered; it reads PGMQGMPGMQ…APPVPSFEFK (78 aa). Residues 184–198 show a composition bias toward polar residues; sequence SQAQIRSESQNQNTA. The segment covering 211–228 has biased composition (basic and acidic residues); sequence FDKKKEEVQPGSESKTEV.

Belongs to the Tim17/Tim22/Tim23 family. Component of the TIM17:23 complex at least composed of TIM23, TIM17 and TIM50. The complex interacts with the TIM44 component of the PAM complex. Interacts with TIM23-2. In terms of tissue distribution, expressed in roots, flowers, leaves and young cotyledons.

It is found in the mitochondrion inner membrane. The protein localises to the mitochondrion outer membrane. Functionally, essential component of the TIM17:23 complex, a complex that mediates the translocation of transit peptide-containing proteins across the mitochondrial inner membrane. Links the inner and outer membranes. This is Mitochondrial import inner membrane translocase subunit TIM17-2 (TIM17-2) from Arabidopsis thaliana (Mouse-ear cress).